A 525-amino-acid polypeptide reads, in one-letter code: Apolipoprotein N-acyltransferase 2 (525 aa).

The next 6 membrane-spanning stretches (helical) occupy residues 25-45, 56-76, 81-101, 115-135, 153-173, and 200-220; these read ILNFGSAIAGFSGLVLVYYAL, FLYGFFVSFVHLMSSFWLAFF, IFTLGASTLAYFFIAMPFGFL, FFFAAIWLLWEFAKSTGFLAY, FVDITGVWGLSFIVPLIAACL, and LIFTAFLVLIINIYGITILSI. A CN hydrolase domain is found at 228–486; it reads LNTVIVQQNT…AESVYTEVPV (259 aa). Glutamate 274 serves as the catalytic Proton acceptor. Residue lysine 339 is part of the active site. Cysteine 397 acts as the Nucleophile in catalysis. The helical transmembrane segment at 495–515 threads the bilayer; that stretch reads ASYKDWLPIMMFLILIFNIFL.

Belongs to the CN hydrolase family. Apolipoprotein N-acyltransferase subfamily.

Its subcellular location is the cell inner membrane. The catalysed reaction is N-terminal S-1,2-diacyl-sn-glyceryl-L-cysteinyl-[lipoprotein] + a glycerophospholipid = N-acyl-S-1,2-diacyl-sn-glyceryl-L-cysteinyl-[lipoprotein] + a 2-acyl-sn-glycero-3-phospholipid + H(+). Its pathway is protein modification; lipoprotein biosynthesis (N-acyl transfer). Its function is as follows. Catalyzes the phospholipid dependent N-acylation of the N-terminal cysteine of apolipoprotein, the last step in lipoprotein maturation. The polypeptide is Apolipoprotein N-acyltransferase 2 (Treponema denticola (strain ATCC 35405 / DSM 14222 / CIP 103919 / JCM 8153 / KCTC 15104)).